The following is a 683-amino-acid chain: Methionine--tRNA ligase (683 aa).

Residues 23–33 (PYANGSAHIGH) carry the 'HIGH' region motif. The Zn(2+) site is built by cysteine 154, cysteine 157, cysteine 166, and cysteine 170. Residues 335 to 339 (KFSKS) carry the 'KMSKS' region motif. Lysine 338 is a binding site for ATP. Positions 583-683 (DFAKMELRVG…KPSEPGTKVR (101 aa)) constitute a tRNA-binding domain.

This sequence belongs to the class-I aminoacyl-tRNA synthetase family. MetG type 1 subfamily. In terms of assembly, homodimer. It depends on Zn(2+) as a cofactor.

It localises to the cytoplasm. It catalyses the reaction tRNA(Met) + L-methionine + ATP = L-methionyl-tRNA(Met) + AMP + diphosphate. Is required not only for elongation of protein synthesis but also for the initiation of all mRNA translation through initiator tRNA(fMet) aminoacylation. The protein is Methionine--tRNA ligase of Methanocella arvoryzae (strain DSM 22066 / NBRC 105507 / MRE50).